The sequence spans 232 residues: Phosphatidylserine decarboxylase proenzyme (232 aa).

The active-site Schiff-base intermediate with substrate; via pyruvic acid is serine 190. Pyruvic acid (Ser); by autocatalysis is present on serine 190.

The protein belongs to the phosphatidylserine decarboxylase family. PSD-A subfamily. Heterodimer of a large membrane-associated beta subunit and a small pyruvoyl-containing alpha subunit. The cofactor is pyruvate. Is synthesized initially as an inactive proenzyme. Formation of the active enzyme involves a self-maturation process in which the active site pyruvoyl group is generated from an internal serine residue via an autocatalytic post-translational modification. Two non-identical subunits are generated from the proenzyme in this reaction, and the pyruvate is formed at the N-terminus of the alpha chain, which is derived from the carboxyl end of the proenzyme. The post-translation cleavage follows an unusual pathway, termed non-hydrolytic serinolysis, in which the side chain hydroxyl group of the serine supplies its oxygen atom to form the C-terminus of the beta chain, while the remainder of the serine residue undergoes an oxidative deamination to produce ammonia and the pyruvoyl prosthetic group on the alpha chain.

The protein resides in the cell membrane. It catalyses the reaction a 1,2-diacyl-sn-glycero-3-phospho-L-serine + H(+) = a 1,2-diacyl-sn-glycero-3-phosphoethanolamine + CO2. It participates in phospholipid metabolism; phosphatidylethanolamine biosynthesis; phosphatidylethanolamine from CDP-diacylglycerol: step 2/2. Catalyzes the formation of phosphatidylethanolamine (PtdEtn) from phosphatidylserine (PtdSer). The protein is Phosphatidylserine decarboxylase proenzyme of Rhodopseudomonas palustris (strain BisB18).